The sequence spans 602 residues: Protein nessun dorma (602 aa).

A coiled-coil region spans residues 188–208 (AEAKYIQQRLDYLELDLSDAE).

As to quaternary structure, interacts (via N-terminus) with both members of the centralspindlin complex, Pav and Tum. Detected in testis (at protein level). Also expressed in ovary.

It is found in the midbody. Required during male meiosis for completion of spermatocyte cytokinesis and possibly also required in female germline cells. Also involved in ring canal formation in male and female germline cells. Not essential for cleavage furrow ingression but is required for contractile ring stability and the attachment of the furrowing membrane to the actomyosin ring in late telophase. Displays high binding affinity for beta-galactosides. The chain is Protein nessun dorma from Drosophila melanogaster (Fruit fly).